Here is a 345-residue protein sequence, read N- to C-terminus: BAG family molecular chaperone regulator 1 (345 aa).

The tract at residues 1-137 (MAQRGGARRP…STRSEEVTRE (137 aa)) is disordered. The span at 68 to 80 (RRPRMKKKTRRRS) shows a compositional bias: basic residues. Residues 81–91 (TRSEELTRSEE) are compositionally biased toward basic and acidic residues. A compositionally biased stretch (low complexity) spans 95–114 (SEEATWSEEATQSEEATQGE). 7 repeat units span residues 96–101 (EEATWS), 102–107 (EEATQS), 108–113 (EEATQG), 114–119 (EEMNRS), 120–125 (QEVTRD), 126–131 (EESTRS), and 132–137 (EEVTRE). Residues 96–137 (EEATWSEEATQSEEATQGEEMNRSQEVTRDEESTRSEEVTRE) are 7 X 6 AA tandem repeat of E-E-X(4). Basic and acidic residues predominate over residues 115–137 (EMNRSQEVTRDEESTRSEEVTRE). A Ubiquitin-like domain is found at 144 to 224 (LTVTVTHSNE…VMLIGKKNSP (81 aa)). The interval 172 to 219 (DLAQVVEEVIGVPQSFQKLIFKGKSLKEMETPLSALGIQDGCRVMLIG) is interaction with HSPA8. The segment at 216 to 345 (MLIGKKNSPQ…LQSTNFALAE (130 aa)) is interaction with PPP1R15A. A Phosphoserine modification is found at Ser223. In terms of domain architecture, BAG spans 246–326 (QLEELNKELT…AFLAECDTVE (81 aa)).

Homodimer. Forms a heteromeric complex with HSP70/HSC70. Binds to the ATPase domain of HSP/HSC70 chaperones. Isoform 1, isoform 3 and isoform 4 but not isoform 2 interact with HSPA8/HSC70. Interacts with NR3C1. Interacts with the N-terminal region of MAPRE2. Interacts with PPP1R15A. Interacts with BCL2 in an ATP-dependent manner. Isoform 2 does not interact with BCL2. Interacts with SIAH1. Interacts with HSPA8 (via NBD). Interacts with HSPA1A (via NBD) and HSPA1B (via NBD). Interacts with SIAH2. Interacts with ESR1; the interaction is promoted in the absence of estradiol (17-beta-estradiol/E2). In terms of processing, ubiquitinated; mediated by SIAH1 or SIAH2 and leading to its subsequent proteasomal degradation. Isoform 4 is the most abundantly expressed isoform. It is ubiquitously expressed throughout most tissues, except the liver, colon, breast and uterine myometrium. Isoform 1 is expressed in the ovary and testis. Isoform 4 is expressed in several types of tumor cell lines, and at consistently high levels in leukemia and lymphoma cell lines. Isoform 1 is expressed in the prostate, breast and leukemia cell lines. Isoform 3 is the least abundant isoform in tumor cell lines (at protein level).

The protein localises to the nucleus. Its subcellular location is the cytoplasm. Its function is as follows. Co-chaperone for HSP70 and HSC70 chaperone proteins. Acts as a nucleotide-exchange factor (NEF) promoting the release of ADP from the HSP70 and HSC70 proteins thereby triggering client/substrate protein release. Nucleotide release is mediated via its binding to the nucleotide-binding domain (NBD) of HSPA8/HSC70 where as the substrate release is mediated via its binding to the substrate-binding domain (SBD) of HSPA8/HSC70. Inhibits the pro-apoptotic function of PPP1R15A, and has anti-apoptotic activity. Markedly increases the anti-cell death function of BCL2 induced by various stimuli. Involved in the STUB1-mediated proteasomal degradation of ESR1 in response to age-related circulating estradiol (17-beta-estradiol/E2) decline, thereby promotes neuronal apoptosis in response to ischemic reperfusion injury. This is BAG family molecular chaperone regulator 1 (BAG1) from Homo sapiens (Human).